Reading from the N-terminus, the 306-residue chain is Anamorsin homolog (306 aa).

The span at 1-25 shows a compositional bias: basic and acidic residues; sequence MVPPREDVTVRIVCERRRTAGKEAR. The disordered stretch occupies residues 1–51; the sequence is MVPPREDVTVRIVCERRRTAGKEARPPPSAKPTPGNTSSHPNAKETHRSNE. Residues 59–190 are N-terminal SAM-like domain; that stretch reads KQSHRRSIMA…RRNNTTNSVA (132 aa). Positions 191 to 218 are linker; it reads TLNFASNNNNGNDLLIDEDNLLTDASNL. Residues C236, C242, C245, and C247 each coordinate [2Fe-2S] cluster. Residues 236-247 form a fe-S binding site A region; that stretch reads CSGRAPCDDCTC. Over residues 252–265 the composition is skewed to basic and acidic residues; the sequence is GAKEGNSEQPKEIK. A disordered region spans residues 252 to 272; sequence GAKEGNSEQPKEIKSSSCGKC. Residues C269, C272, C280, and C283 each contribute to the [4Fe-4S] cluster site. 2 consecutive short sequence motifs (cx2C motif) follow at residues 269 to 272 and 280 to 283; these read CGKC and CASC. Residues 269–283 form a fe-S binding site B region; it reads CGKCSLGDAFRCASC.

The protein belongs to the anamorsin family. In terms of assembly, monomer. Requires [2Fe-2S] cluster as cofactor. [4Fe-4S] cluster serves as cofactor.

It localises to the cytoplasm. Its subcellular location is the mitochondrion intermembrane space. Functionally, component of the cytosolic iron-sulfur (Fe-S) protein assembly (CIA) machinery. Required for the maturation of extramitochondrial Fe-S proteins. Part of an electron transfer chain functioning in an early step of cytosolic Fe-S biogenesis, facilitating the de novo assembly of a [4Fe-4S] cluster on the cytosolic Fe-S scaffold complex. Electrons are transferred from NADPH via a FAD- and FMN-containing diflavin oxidoreductase. Together with the diflavin oxidoreductase, also required for the assembly of the diferric tyrosyl radical cofactor of ribonucleotide reductase (RNR), probably by providing electrons for reduction during radical cofactor maturation in the catalytic small subunit. In Phaeodactylum tricornutum (strain CCAP 1055/1), this protein is Anamorsin homolog.